The sequence spans 437 residues: Trigger factor (437 aa).

The region spanning 164–249 is the PPIase FKBP-type domain; sequence GDRVTIDFAG…LKSVEAPKLP (86 aa).

The protein belongs to the FKBP-type PPIase family. Tig subfamily.

Its subcellular location is the cytoplasm. The catalysed reaction is [protein]-peptidylproline (omega=180) = [protein]-peptidylproline (omega=0). In terms of biological role, involved in protein export. Acts as a chaperone by maintaining the newly synthesized protein in an open conformation. Functions as a peptidyl-prolyl cis-trans isomerase. The protein is Trigger factor of Azoarcus sp. (strain BH72).